The sequence spans 166 residues: MKEKIPFYNEKEFNEMMKKTKKGTFSGWYIINPENKSVEFSGNFNRQFKLNKPVIPVNTEYVTRKEFNEYKDSNDQRLTKIENKVDKLEVKVDKLEEKVDKLEAKVDKLEEKVDKLEAKVDKLEEKVDKLEAKVDSGFEMLAKILAAINKRLDSIEGRLDKIEPPK.

The protein belongs to the UPF0134 family.

The sequence is that of UPF0134 protein MPN_138 from Mycoplasma pneumoniae (strain ATCC 29342 / M129 / Subtype 1) (Mycoplasmoides pneumoniae).